A 404-amino-acid chain; its full sequence is Serine/threonine-protein phosphatase 2A regulatory subunit rsa-1 (404 aa).

In terms of assembly, part of a complex consisting of a common heterodimeric core enzyme, composed of catalytic subunit let-92 and constant regulatory subunit paa-1, that associates with a variety of regulatory subunits which confer distinct properties to the holoenzyme. Interacts with rsa-2, spd-5 and tpxl-1.

Its subcellular location is the cytoplasm. It localises to the cytoskeleton. It is found in the microtubule organizing center. The protein localises to the centrosome. Functionally, regulatory subunit of phosphatase let-92 which recruits let-92/paa-1 complex to the centrosomes, thereby regulating microtubule outgrowth from centrosomes and mitotic spindle assembly ensuring the stability of kinetochore microtubules. This chain is Serine/threonine-protein phosphatase 2A regulatory subunit rsa-1, found in Caenorhabditis elegans.